We begin with the raw amino-acid sequence, 287 residues long: Survival motor neuron protein (287 aa).

The disordered stretch occupies residues 1-27; it reads MGGGGGLPEPEDSVLFRRGTGQSDDSD. The segment at 8–39 is P1 (binding site for GEMIN2); sequence PEPEDSVLFRRGTGQSDDSDIWDDTALIKAYD. Position 20 is a phosphothreonine (Thr-20). Phosphoserine occurs at positions 23 and 26. Residue Lys-46 forms a Glycyl lysine isopeptide (Lys-Gly) (interchain with G-Cter in SUMO2) linkage. The segment at 52–83 is disordered; sequence GDISEASDKPKSTPKRKPAKKNKSQKKNATTA. Over residues 63–77 the composition is skewed to basic residues; sequence STPKRKPAKKNKSQK. Thr-64 is subject to Phosphothreonine. Positions 86–146 constitute a Tudor domain; sequence QWKVGDKCSA…LSPACEVANN (61 aa). The segment at 92–205 is required for interaction with RPP20/POP7; the sequence is KCSAVWSEDG…MSGSGLGPGK (114 aa). Positions 148 to 216 are disordered; that stretch reads EQDTQENENE…GVKFSGPPPP (69 aa). Residues 157–180 show a composition bias toward polar residues; that stretch reads ESQISTDESENSSRSPGNKPNNIK. A Glycyl lysine isopeptide (Lys-Gly) (interchain with G-Cter in SUMO2) cross-link involves residue Lys-205. The tract at residues 234–261 is P2 (binding site for SM B); that stretch reads PPIIPPPPPICPDSLDDADALGSMLISW. The interval 273–287 is required for interaction with SYNCRIP; sequence GFKQNQKEGRCSHFN.

This sequence belongs to the SMN family. In terms of assembly, homooligomer; may form higher order homooligomers in the dimer to octamer range. Part of the core SMN complex that contains SMN1, GEMIN2/SIP1, DDX20/GEMIN3, GEMIN4, GEMIN5, GEMIN6, GEMIN7, GEMIN8 and STRAP/UNRIP. Part of the SMN-Sm complex that contains SMN1, GEMIN2/SIP1, DDX20/GEMIN3, GEMIN4, GEMIN5, GEMIN6, GEMIN7, GEMIN8, STRAP/UNRIP and the Sm proteins SNRPB, SNRPD1, SNRPD2, SNRPD3, SNRPE, SNRPF and SNRPG. Component of an import snRNP complex composed of KPNB1, RNUT1, SMN1 and ZNF259. Interacts with DDX20, FBL, NOLA1, RNUT1, SYNCRIP and with several spliceosomal snRNP core Sm proteins, including SNRPB, SNRPD1, SNRPD2, SNRPD3, SNRPE and ILF3. Interacts with GEMIN2; the interaction is direct. Interacts with GEMIN3; the interaction is direct. Interacts with GEMIN8; the interaction is direct. Interacts with SNRPB; the interaction is direct. Interacts (via Tudor domain) with SNRPD1 (via C-terminus); the interaction is direct. Interacts with SNRPD2; the interaction is direct. Interacts (via Tudor domain) with SNRPD3 (via C-terminus); the interaction is direct. Interacts with SNRPE; the interaction is direct. Interacts with OSTF1, LSM10, LSM11 and RPP20/POP7. Interacts (via C-terminal region) with ZPR1 (via C-terminal region). Interacts (via Tudor domain) with COIL. Interacts with SETX; recruits SETX to POLR2A. Interacts with POLR2A (via the C-terminal domain (CTD)). Interacts with PRMT5. Interacts with XRN2. Interacts (via C-terminus) with FMR1 (via C-terminus); the interaction is direct and occurs in a RNA-independent manner. Interacts (via Tudor domain) with SF3B2 ('Arg-508'-methylated form). Interacts with WRAP53/TCAB1. Interacts (via Tudor domain) with ELAVL4 in an RNA-independent manner; the interaction is required for localization of ELAVL4 to RNA granules. Interacts with FRG1.

It is found in the nucleus. The protein resides in the gem. It localises to the cajal body. The protein localises to the cytoplasm. Its subcellular location is the cytoplasmic granule. It is found in the perikaryon. The protein resides in the cell projection. It localises to the neuron projection. The protein localises to the axon. Its subcellular location is the myofibril. It is found in the sarcomere. The protein resides in the z line. In terms of biological role, the SMN complex catalyzes the assembly of small nuclear ribonucleoproteins (snRNPs), the building blocks of the spliceosome, and thereby plays an important role in the splicing of cellular pre-mRNAs. Most spliceosomal snRNPs contain a common set of Sm proteins SNRPB, SNRPD1, SNRPD2, SNRPD3, SNRPE, SNRPF and SNRPG that assemble in a heptameric protein ring on the Sm site of the small nuclear RNA to form the core snRNP (Sm core). In the cytosol, the Sm proteins SNRPD1, SNRPD2, SNRPE, SNRPF and SNRPG are trapped in an inactive 6S pICln-Sm complex by the chaperone CLNS1A that controls the assembly of the core snRNP. To assemble core snRNPs, the SMN complex accepts the trapped 5Sm proteins from CLNS1A forming an intermediate. Binding of snRNA inside 5Sm ultimately triggers eviction of the SMN complex, thereby allowing binding of SNRPD3 and SNRPB to complete assembly of the core snRNP. Within the SMN complex, SMN1 acts as a structural backbone and together with GEMIN2 it gathers the Sm complex subunits. Ensures the correct splicing of U12 intron-containing genes that may be important for normal motor and proprioceptive neurons development. Also required for resolving RNA-DNA hybrids created by RNA polymerase II, that form R-loop in transcription terminal regions, an important step in proper transcription termination. May also play a role in the metabolism of small nucleolar ribonucleoprotein (snoRNPs). This chain is Survival motor neuron protein (SMN1), found in Canis lupus familiaris (Dog).